A 276-amino-acid chain; its full sequence is Putative translation initiation factor eIF-2B subunit 2-like (276 aa).

Belongs to the eIF-2B alpha/beta/delta subunits family. In terms of assembly, complex of two different subunits.

In terms of biological role, catalyzes the exchange of initiation factor 2-bound GDP for GTP. The sequence is that of Putative translation initiation factor eIF-2B subunit 2-like from Pyrococcus horikoshii (strain ATCC 700860 / DSM 12428 / JCM 9974 / NBRC 100139 / OT-3).